Consider the following 331-residue polypeptide: Thiamine thiazole synthase (331 aa).

Residues Ser82, 103 to 104 (EA), Gly111, and Val176 contribute to the substrate site. Cys210 carries the 2,3-didehydroalanine (Cys) modification. Substrate is bound by residues Asp212, His242, Met296, and 306 to 308 (RMG).

It belongs to the THI4 family. As to quaternary structure, homooctamer. Requires Fe cation as cofactor. In terms of processing, during the catalytic reaction, a sulfide is transferred from Cys-210 to a reaction intermediate, generating a dehydroalanine residue.

The protein resides in the cytoplasm. It is found in the nucleus. It carries out the reaction [ADP-thiazole synthase]-L-cysteine + glycine + NAD(+) = [ADP-thiazole synthase]-dehydroalanine + ADP-5-ethyl-4-methylthiazole-2-carboxylate + nicotinamide + 3 H2O + 2 H(+). Its function is as follows. Involved in biosynthesis of the thiamine precursor thiazole. Catalyzes the conversion of NAD and glycine to adenosine diphosphate 5-(2-hydroxyethyl)-4-methylthiazole-2-carboxylic acid (ADT), an adenylated thiazole intermediate. The reaction includes an iron-dependent sulfide transfer from a conserved cysteine residue of the protein to a thiazole intermediate. The enzyme can only undergo a single turnover, which suggests it is a suicide enzyme. May have additional roles in adaptation to various stress conditions and in DNA damage tolerance. This is Thiamine thiazole synthase from Eremothecium gossypii (strain ATCC 10895 / CBS 109.51 / FGSC 9923 / NRRL Y-1056) (Yeast).